The primary structure comprises 284 residues: Nucleotide-binding protein Sden_0486 (284 aa).

An ATP-binding site is contributed by 8 to 15 (GRSGSGKS). GTP is bound at residue 56-59 (DVRN).

The protein belongs to the RapZ-like family.

Displays ATPase and GTPase activities. The sequence is that of Nucleotide-binding protein Sden_0486 from Shewanella denitrificans (strain OS217 / ATCC BAA-1090 / DSM 15013).